Reading from the N-terminus, the 320-residue chain is GTPase Era (320 aa).

Residues 25-193 (HCGFIAIVGR…RKHVRNHLPK (169 aa)) form the Era-type G domain. Positions 33-40 (GRPNVGKS) are G1. Position 33 to 40 (33 to 40 (GRPNVGKS)) interacts with GTP. The G2 stretch occupies residues 59–63 (QTTRH). The G3 stretch occupies residues 80–83 (DTPG). Residues 80 to 84 (DTPGL) and 142 to 145 (NKVD) each bind GTP. Positions 142-145 (NKVD) are G4. The segment at 172–174 (ISA) is G5. Residues 216-302 (VREKLMRFTG…YLETWVKVKS (87 aa)) enclose the KH type-2 domain.

It belongs to the TRAFAC class TrmE-Era-EngA-EngB-Septin-like GTPase superfamily. Era GTPase family. As to quaternary structure, monomer.

The protein resides in the cytoplasm. Its subcellular location is the cell inner membrane. Functionally, an essential GTPase that binds both GDP and GTP, with rapid nucleotide exchange. Plays a role in 16S rRNA processing and 30S ribosomal subunit biogenesis and possibly also in cell cycle regulation and energy metabolism. The protein is GTPase Era of Vibrio parahaemolyticus serotype O3:K6 (strain RIMD 2210633).